Here is a 364-residue protein sequence, read N- to C-terminus: Long-wave-sensitive opsin 1 (364 aa).

The Extracellular portion of the chain corresponds to 1-52; that stretch reads MTQRWGPQRLAGGQPHAGLEDSTRASIFTYTNSNATRGPFEGPNYHIAPRWV. Residue Ser22 is glycosylated (O-linked (GlcNAc) serine). The N-linked (GlcNAc...) asparagine glycan is linked to Asn34. The helical transmembrane segment at 53–77 threads the bilayer; sequence YHVTSAWMIFVVIASVFTNGLVLAA. Residues 78–89 are Cytoplasmic-facing; that stretch reads TMKFKKLRHPLN. A helical membrane pass occupies residues 90–115; sequence WILVNLAVADLAETIIASTISVVNQI. Residues 116-129 are Extracellular-facing; that stretch reads YGYFVLGHPMCVLE. A disulfide bridge links Cys126 with Cys203. The chain crosses the membrane as a helical span at residues 130–149; sequence GYTVSLCGITGLWSLAIISW. Over 150 to 168 the chain is Cytoplasmic; sequence ERWLVVCKPFGNVRFDAKL. The chain crosses the membrane as a helical span at residues 169-192; that stretch reads AIAGIAFSWIWAAVWTAPPIFGWS. Residues 193–218 lie on the Extracellular side of the membrane; it reads RYWPHGLKTSCGPDVFSGSSYPGVQS. A helical transmembrane segment spans residues 219 to 246; the sequence is YMIVLMITCCIIPLSVIVLCYLQVWLAI. Topologically, residues 247–268 are cytoplasmic; sequence RAVAKQQKESESTQKAEKEVTR. The helical transmembrane segment at 269–292 threads the bilayer; the sequence is MVMVMIFAYCVCWGPYTFFACFAA. Residues 293 to 300 lie on the Extracellular side of the membrane; the sequence is AHPGYAFH. Residues 301–325 traverse the membrane as a helical segment; it reads PLVAALPAYFAKSATIYNPIIYVFM. At Lys312 the chain carries N6-(retinylidene)lysine. Residues 326 to 364 lie on the Cytoplasmic side of the membrane; sequence NRQFRNCIMQLFGKKVDDGSELSSASRTEASSVSSVSPA.

This sequence belongs to the G-protein coupled receptor 1 family. Opsin subfamily. In terms of processing, phosphorylated on some or all of the serine and threonine residues present in the C-terminal region. As to expression, the three color pigments are found in the cone photoreceptor cells. Expressed in retina.

The protein localises to the membrane. In terms of biological role, visual pigments are the light-absorbing molecules that mediate vision. They consist of an apoprotein, opsin, covalently linked to cis-retinal. This chain is Long-wave-sensitive opsin 1 (OPN1LW), found in Felis catus (Cat).